We begin with the raw amino-acid sequence, 311 residues long: Aspartate carbamoyltransferase catalytic subunit (311 aa).

Carbamoyl phosphate-binding residues include Arg55 and Thr56. Lys85 contacts L-aspartate. Positions 106, 135, and 138 each coordinate carbamoyl phosphate. Positions 168 and 230 each coordinate L-aspartate. The carbamoyl phosphate site is built by Leu268 and Pro269.

This sequence belongs to the aspartate/ornithine carbamoyltransferase superfamily. ATCase family. In terms of assembly, heterododecamer (2C3:3R2) of six catalytic PyrB chains organized as two trimers (C3), and six regulatory PyrI chains organized as three dimers (R2).

It carries out the reaction carbamoyl phosphate + L-aspartate = N-carbamoyl-L-aspartate + phosphate + H(+). The protein operates within pyrimidine metabolism; UMP biosynthesis via de novo pathway; (S)-dihydroorotate from bicarbonate: step 2/3. Its function is as follows. Catalyzes the condensation of carbamoyl phosphate and aspartate to form carbamoyl aspartate and inorganic phosphate, the committed step in the de novo pyrimidine nucleotide biosynthesis pathway. This Pectobacterium carotovorum subsp. carotovorum (strain PC1) protein is Aspartate carbamoyltransferase catalytic subunit.